A 420-amino-acid polypeptide reads, in one-letter code: MGMTITEKILCRHTDLDEVRPGMLINAKVDIALGNDVTAPLAIDEFRKAGGKKVFDRDKVVLIPDHFTPNKDINSAAQCKIMRDFAREQEITHYYEVGEVGVEHALLPEKGIVLPGDLVIGADSHTCTYGALGAFATGVGSTDLAAAMLTGEVWFKVPESIRFVLSGTLNPWVSGKDLILYIIGKIGVDGALYKAMEFTGDTIASLTMADRFTIANMAIEAGGKNGIFTPDEITEAYVKPRAKRPYTFYASDPDAAYAQVIEIDVNRIEPQVAFPHLPSNTKGISEVGQVPLDQVVIGSCTNGRIEDLRAAAAVLKGRKADPRVRLIVIPATQEIYRMAMKEGLFDIFLDANAAISTPTCGPCLGGHMGILAAGERALATTNRNFVGRMGHPRSEVYLSNPAVAAASAVLGRIAGPDELK.

Residues Cys300, Cys360, and Cys363 each contribute to the [4Fe-4S] cluster site.

Belongs to the aconitase/IPM isomerase family. LeuC type 2 subfamily. As to quaternary structure, heterodimer of LeuC and LeuD. Requires [4Fe-4S] cluster as cofactor.

The enzyme catalyses (2R,3S)-3-isopropylmalate = (2S)-2-isopropylmalate. It functions in the pathway amino-acid biosynthesis; L-leucine biosynthesis; L-leucine from 3-methyl-2-oxobutanoate: step 2/4. Its function is as follows. Catalyzes the isomerization between 2-isopropylmalate and 3-isopropylmalate, via the formation of 2-isopropylmaleate. The protein is 3-isopropylmalate dehydratase large subunit of Syntrophus aciditrophicus (strain SB).